Consider the following 70-residue polypeptide: Gas vesicle protein A (70 aa).

Belongs to the gas vesicle GvpA family. The gas vesicle shell is 2 nm thick and consists of a single layer of this protein. It forms helical ribs nearly perpendicular to the long axis of the vesicle.

It localises to the gas vesicle shell. Its function is as follows. Gas vesicles are hollow, gas filled proteinaceous nanostructures found in some microorganisms. During planktonic growth they allow positioning of the organism at a favorable depth for light or nutrient acquisition. GvpA forms the protein shell. This chain is Gas vesicle protein A, found in Ancylobacter aquaticus.